The following is a 489-amino-acid chain: Glycogen synthase (489 aa).

Residue Arg-20 coordinates ADP-alpha-D-glucose.

It belongs to the glycosyltransferase 1 family. Bacterial/plant glycogen synthase subfamily.

The enzyme catalyses [(1-&gt;4)-alpha-D-glucosyl](n) + ADP-alpha-D-glucose = [(1-&gt;4)-alpha-D-glucosyl](n+1) + ADP + H(+). Its pathway is glycan biosynthesis; glycogen biosynthesis. Functionally, synthesizes alpha-1,4-glucan chains using ADP-glucose. This is Glycogen synthase from Chlorobium phaeovibrioides (strain DSM 265 / 1930) (Prosthecochloris vibrioformis (strain DSM 265)).